Here is a 254-residue protein sequence, read N- to C-terminus: Aspartate/glutamate leucyltransferase (254 aa).

The protein belongs to the R-transferase family. Bpt subfamily.

Its subcellular location is the cytoplasm. The enzyme catalyses N-terminal L-glutamyl-[protein] + L-leucyl-tRNA(Leu) = N-terminal L-leucyl-L-glutamyl-[protein] + tRNA(Leu) + H(+). It catalyses the reaction N-terminal L-aspartyl-[protein] + L-leucyl-tRNA(Leu) = N-terminal L-leucyl-L-aspartyl-[protein] + tRNA(Leu) + H(+). In terms of biological role, functions in the N-end rule pathway of protein degradation where it conjugates Leu from its aminoacyl-tRNA to the N-termini of proteins containing an N-terminal aspartate or glutamate. This Maricaulis maris (strain MCS10) (Caulobacter maris) protein is Aspartate/glutamate leucyltransferase.